The following is a 317-amino-acid chain: Beta-ketoacyl-[acyl-carrier-protein] synthase III (317 aa).

Residues Cys-112 and His-244 contribute to the active site. The interval 245–249 (QANLR) is ACP-binding. Asn-274 is a catalytic residue.

It belongs to the thiolase-like superfamily. FabH family. As to quaternary structure, homodimer.

Its subcellular location is the cytoplasm. It carries out the reaction malonyl-[ACP] + acetyl-CoA + H(+) = 3-oxobutanoyl-[ACP] + CO2 + CoA. Its pathway is lipid metabolism; fatty acid biosynthesis. Catalyzes the condensation reaction of fatty acid synthesis by the addition to an acyl acceptor of two carbons from malonyl-ACP. Catalyzes the first condensation reaction which initiates fatty acid synthesis and may therefore play a role in governing the total rate of fatty acid production. Possesses both acetoacetyl-ACP synthase and acetyl transacylase activities. Its substrate specificity determines the biosynthesis of branched-chain and/or straight-chain of fatty acids. This chain is Beta-ketoacyl-[acyl-carrier-protein] synthase III, found in Sodalis glossinidius (strain morsitans).